A 238-amino-acid chain; its full sequence is Outer membrane protein A (238 aa).

The next 5 membrane-spanning stretches (beta stranded) occupy residues 1–8 (LTAKLGYP), 13–21 (LDIYTRLGG), 43–52 (PVFAGGVEYA), 57–64 (IATRLEYQ), and 83–91 (LLSVGVSYR). 3 repeat units span residues 104 to 105 (AP), 106 to 107 (AP), and 108 to 109 (AP). Residues 104-109 (APAPAP) form a 3 X 2 AA tandem repeats of A-P region. In terms of domain architecture, OmpA-like spans 111–238 (VQTKHFTLKS…RRVEIEVKGI (128 aa)). A disulfide bridge links Cys212 with Cys224.

The protein belongs to the outer membrane OOP (TC 1.B.6) superfamily. OmpA family. In terms of assembly, monomer and homodimer.

The protein localises to the cell outer membrane. Its function is as follows. With TolR probably plays a role in maintaining the position of the peptidoglycan cell wall in the periplasm. Acts as a porin with low permeability that allows slow penetration of small solutes; an internal gate slows down solute passage. The sequence is that of Outer membrane protein A from Citrobacter freundii.